The chain runs to 290 residues: Ribonuclease HIII (290 aa).

An RNase H type-2 domain is found at 78 to 290 (LPLIGTDEVG…FKNTEKAKNA (213 aa)). Residues Asp-84, Glu-85, and Asp-187 each coordinate a divalent metal cation.

It belongs to the RNase HII family. RnhC subfamily. It depends on Mn(2+) as a cofactor. Mg(2+) serves as cofactor.

The protein localises to the cytoplasm. The catalysed reaction is Endonucleolytic cleavage to 5'-phosphomonoester.. In terms of biological role, endonuclease that specifically degrades the RNA of RNA-DNA hybrids. The sequence is that of Ribonuclease HIII from Streptococcus pneumoniae serotype 2 (strain D39 / NCTC 7466).